Reading from the N-terminus, the 168-residue chain is Group 2 truncated hemoglobin 3-1 (168 aa).

Residue His98 coordinates heme b.

It belongs to the truncated hemoglobin family. Group II subfamily. Homodimer when ferric. Mainly expressed in root nodules, but barely in leaves, roots, stems, flowers and fruits.

Functionally, hemoglobin-like protein that exhibits an unusual concentration-independent binding of O(2) and CO. Required for general plant development and during nodulation. May promote shoot organogenesis from root explants. In Lotus japonicus (Lotus corniculatus var. japonicus), this protein is Group 2 truncated hemoglobin 3-1.